Reading from the N-terminus, the 299-residue chain is uncharacterized protein (299 aa).

This sequence belongs to the glycosyltransferase 2 family.

This is an uncharacterized protein from Mycoplasma pneumoniae (strain ATCC 29342 / M129 / Subtype 1) (Mycoplasmoides pneumoniae).